Reading from the N-terminus, the 94-residue chain is Cell division protein CrgA (94 aa).

Transmembrane regions (helical) follow at residues 31-51 (VWFV…LLVF) and 71-91 (LGPW…LLTM).

The protein belongs to the CrgA family.

The protein resides in the cell membrane. In terms of biological role, involved in cell division. This Mycobacterium sp. (strain JLS) protein is Cell division protein CrgA.